Here is a 423-residue protein sequence, read N- to C-terminus: Gamma-glutamyl phosphate reductase (423 aa).

The protein belongs to the gamma-glutamyl phosphate reductase family.

It is found in the cytoplasm. It catalyses the reaction L-glutamate 5-semialdehyde + phosphate + NADP(+) = L-glutamyl 5-phosphate + NADPH + H(+). It functions in the pathway amino-acid biosynthesis; L-proline biosynthesis; L-glutamate 5-semialdehyde from L-glutamate: step 2/2. Catalyzes the NADPH-dependent reduction of L-glutamate 5-phosphate into L-glutamate 5-semialdehyde and phosphate. The product spontaneously undergoes cyclization to form 1-pyrroline-5-carboxylate. This chain is Gamma-glutamyl phosphate reductase, found in Pseudomonas putida (strain GB-1).